Reading from the N-terminus, the 293-residue chain is Pyridoxal 5'-phosphate synthase subunit PdxS (293 aa).

D23 is a D-ribose 5-phosphate binding site. Catalysis depends on K80, which acts as the Schiff-base intermediate with D-ribose 5-phosphate. D-ribose 5-phosphate is bound at residue G152. A D-glyceraldehyde 3-phosphate-binding site is contributed by R164. D-ribose 5-phosphate-binding positions include G213 and G234–S235.

The protein belongs to the PdxS/SNZ family. In the presence of PdxT, forms a dodecamer of heterodimers.

It catalyses the reaction aldehydo-D-ribose 5-phosphate + D-glyceraldehyde 3-phosphate + L-glutamine = pyridoxal 5'-phosphate + L-glutamate + phosphate + 3 H2O + H(+). The protein operates within cofactor biosynthesis; pyridoxal 5'-phosphate biosynthesis. Functionally, catalyzes the formation of pyridoxal 5'-phosphate from ribose 5-phosphate (RBP), glyceraldehyde 3-phosphate (G3P) and ammonia. The ammonia is provided by the PdxT subunit. Can also use ribulose 5-phosphate and dihydroxyacetone phosphate as substrates, resulting from enzyme-catalyzed isomerization of RBP and G3P, respectively. The polypeptide is Pyridoxal 5'-phosphate synthase subunit PdxS (Roseiflexus castenholzii (strain DSM 13941 / HLO8)).